Reading from the N-terminus, the 126-residue chain is Thiocyanate hydrolase subunit alpha (126 aa).

In terms of assembly, heterododecamer consisting of 4 alpha, 4 beta, and 4 gamma subunits.

It catalyses the reaction thiocyanate + H2O + 2 H(+) = carbonyl sulfide + NH4(+). It functions in the pathway organosulfur degradation; thiocyanate degradation. Involved in the degradation of thiocyanate. The protein is Thiocyanate hydrolase subunit alpha (scnA) of Thiobacillus thioparus.